The primary structure comprises 937 residues: Protein translocase subunit SecA (937 aa).

ATP-binding positions include Q90, 108–112, and D509; that span reads GEGKT.

Belongs to the SecA family. In terms of assembly, monomer and homodimer. Part of the essential Sec protein translocation apparatus which comprises SecA, SecYEG and auxiliary proteins SecDF. Other proteins may also be involved.

The protein resides in the cell inner membrane. The protein localises to the cellular thylakoid membrane. Its subcellular location is the cytoplasm. It carries out the reaction ATP + H2O + cellular proteinSide 1 = ADP + phosphate + cellular proteinSide 2.. In terms of biological role, part of the Sec protein translocase complex. Interacts with the SecYEG preprotein conducting channel. Has a central role in coupling the hydrolysis of ATP to the transfer of proteins into and across the cell membrane, serving as an ATP-driven molecular motor driving the stepwise translocation of polypeptide chains across the membrane. Its function is as follows. Probably participates in protein translocation into and across both the cytoplasmic and thylakoid membranes in cyanobacterial cells. The polypeptide is Protein translocase subunit SecA (Parasynechococcus marenigrum (strain WH8102)).